The sequence spans 193 residues: Probable GTP-binding protein EngB (193 aa).

One can recognise an EngB-type G domain in the interval 19–188 (SVKEVCFMGR…HKQIFELFKA (170 aa)). GTP-binding positions include 27 to 34 (GRSNVGKS), 53 to 57 (GRTQL), 70 to 73 (DLPG), 136 to 139 (NKFD), and 167 to 169 (VSA). 2 residues coordinate Mg(2+): Ser-34 and Thr-55.

It belongs to the TRAFAC class TrmE-Era-EngA-EngB-Septin-like GTPase superfamily. EngB GTPase family. Mg(2+) is required as a cofactor.

Its function is as follows. Necessary for normal cell division and for the maintenance of normal septation. In Mycoplasma pneumoniae (strain ATCC 29342 / M129 / Subtype 1) (Mycoplasmoides pneumoniae), this protein is Probable GTP-binding protein EngB.